We begin with the raw amino-acid sequence, 339 residues long: Methylcobamide:CoM methyltransferase MtaA (339 aa).

Residues His237, Cys239, and Cys316 each contribute to the Zn(2+) site.

It belongs to the uroporphyrinogen decarboxylase family. MtbA/mtaA subfamily. Zn(2+) serves as cofactor.

The enzyme catalyses methyl-Co(III)-[methanol-specific corrinoid protein] + coenzyme M = Co(I)-[methanol-specific corrinoid protein] + methyl-coenzyme M + H(+). Methyltransferase involved in methanogenesis in the methanol pathway. Catalyzes the transfer of the methyl group from the methylated corrinoid protein MtaC to coenzyme M, forming the substrate for coenzyme-B sulfoethylthiotransferase. MtaC can be substituted by free cob(I)alamin in vitro. In Methanosarcina barkeri, this protein is Methylcobamide:CoM methyltransferase MtaA (mtaA).